The following is a 78-amino-acid chain: D-alanyl carrier protein (78 aa).

One can recognise a Carrier domain in the interval 1 to 78 (MAFRENVLEI…MIITQLEALK (78 aa)). Ser-36 carries the post-translational modification O-(pantetheine 4'-phosphoryl)serine.

Belongs to the DltC family. Post-translationally, 4'-phosphopantetheine is transferred from CoA to a specific serine of apo-DCP.

It localises to the cytoplasm. It participates in cell wall biogenesis; lipoteichoic acid biosynthesis. In terms of biological role, carrier protein involved in the D-alanylation of lipoteichoic acid (LTA). The loading of thioester-linked D-alanine onto DltC is catalyzed by D-alanine--D-alanyl carrier protein ligase DltA. The DltC-carried D-alanyl group is further transferred to cell membrane phosphatidylglycerol (PG) by forming an ester bond, probably catalyzed by DltD. D-alanylation of LTA plays an important role in modulating the properties of the cell wall in Gram-positive bacteria, influencing the net charge of the cell wall. In Listeria monocytogenes serotype 4a (strain HCC23), this protein is D-alanyl carrier protein.